The sequence spans 269 residues: Energy-coupling factor transporter ATP-binding protein EcfA1 (269 aa).

The ABC transporter domain occupies 8 to 242; that stretch reads IEFKDVSFQY…EEALISVGLD (235 aa). An ATP-binding site is contributed by 42–49; the sequence is GHNGSGKS.

It belongs to the ABC transporter superfamily. Energy-coupling factor EcfA family. Forms a stable energy-coupling factor (ECF) transporter complex composed of 2 membrane-embedded substrate-binding proteins (S component), 2 ATP-binding proteins (A component) and 2 transmembrane proteins (T component).

The protein resides in the cell membrane. In terms of biological role, ATP-binding (A) component of a common energy-coupling factor (ECF) ABC-transporter complex. Unlike classic ABC transporters this ECF transporter provides the energy necessary to transport a number of different substrates. This Staphylococcus epidermidis (strain ATCC 35984 / DSM 28319 / BCRC 17069 / CCUG 31568 / BM 3577 / RP62A) protein is Energy-coupling factor transporter ATP-binding protein EcfA1.